The following is a 150-amino-acid chain: Large ribosomal subunit protein bL9 (150 aa).

It belongs to the bacterial ribosomal protein bL9 family.

In terms of biological role, binds to the 23S rRNA. The polypeptide is Large ribosomal subunit protein bL9 (Burkholderia pseudomallei (strain 668)).